Reading from the N-terminus, the 463-residue chain is GTPase Der (463 aa).

EngA-type G domains follow at residues 3–166 and 177–350; these read PVVA…PESG and IRIA…QSAM. GTP contacts are provided by residues 9–16, 56–60, 118–121, 183–190, 230–234, and 295–298; these read GRTNVGKS, DTGGI, NKID, GRPNVGKS, DTAGI, and NKWD. The region spanning 351–435 is the KH-like domain; the sequence is LDLSASRLTQ…PLKLVFKSAE (85 aa).

The protein belongs to the TRAFAC class TrmE-Era-EngA-EngB-Septin-like GTPase superfamily. EngA (Der) GTPase family. As to quaternary structure, associates with the 50S ribosomal subunit.

GTPase that plays an essential role in the late steps of ribosome biogenesis. This chain is GTPase Der, found in Methylococcus capsulatus (strain ATCC 33009 / NCIMB 11132 / Bath).